A 241-amino-acid chain; its full sequence is 3-deoxy-manno-octulosonate cytidylyltransferase (241 aa).

Belongs to the KdsB family.

It localises to the cytoplasm. The catalysed reaction is 3-deoxy-alpha-D-manno-oct-2-ulosonate + CTP = CMP-3-deoxy-beta-D-manno-octulosonate + diphosphate. The protein operates within nucleotide-sugar biosynthesis; CMP-3-deoxy-D-manno-octulosonate biosynthesis; CMP-3-deoxy-D-manno-octulosonate from 3-deoxy-D-manno-octulosonate and CTP: step 1/1. It functions in the pathway bacterial outer membrane biogenesis; lipopolysaccharide biosynthesis. Activates KDO (a required 8-carbon sugar) for incorporation into bacterial lipopolysaccharide in Gram-negative bacteria. This is 3-deoxy-manno-octulosonate cytidylyltransferase from Rickettsia typhi (strain ATCC VR-144 / Wilmington).